Reading from the N-terminus, the 196-residue chain is Peptide deformylase (196 aa).

Residues cysteine 105 and histidine 147 each coordinate Fe cation. Glutamate 148 is an active-site residue. Histidine 151 contributes to the Fe cation binding site.

The protein belongs to the polypeptide deformylase family. The cofactor is Fe(2+).

It catalyses the reaction N-terminal N-formyl-L-methionyl-[peptide] + H2O = N-terminal L-methionyl-[peptide] + formate. Functionally, removes the formyl group from the N-terminal Met of newly synthesized proteins. Requires at least a dipeptide for an efficient rate of reaction. N-terminal L-methionine is a prerequisite for activity but the enzyme has broad specificity at other positions. The sequence is that of Peptide deformylase from Christiangramia forsetii (strain DSM 17595 / CGMCC 1.15422 / KT0803) (Gramella forsetii).